The following is a 771-amino-acid chain: Solute carrier family 7 member 14 (771 aa).

The next 6 membrane-spanning stretches (helical) occupy residues 58–78, 83–103, 130–150, 187–207, 216–236, and 251–271; these read LISLGVGSCVGTGMYVVSGLV, AGPGVIVSFIIAAVASILSGV, FVAFFIGWNLILEYLIGTAAG, YPDLLALVIAIIVTIIVALGV, VLNVLNLAVWVFIMIAGFFFI, and WSGVLQGAATCFYAFIGFDII. N282 carries N-linked (GlcNAc...) asparagine glycosylation. A run of 5 helical transmembrane segments spans residues 291–311, 336–356, 360–380, 384–404, and 407–427; these read ASLVICLTAYVSVSMILTLMV, FVVAIGSVAGLTVSLLGSLFP, VIYAMAGDGLLFRFLAHVSSY, PVVACIVSGFLAALLSLLVSL, and LIEMMSIGTLLAYTLVSVCVL. Phosphoserine occurs at positions 465, 468, and 488. Transmembrane regions (helical) follow at residues 565-585, 596-616, 628-648, and 655-675; these read VTICVLLLFILMFVFCSFIIF, WAILLVVLMVLLISALVFVIL, MAPCLPFVPAFAMLVNIYLML, and WIRFAVWCFVGMLIYFGYGIW. N676 is a glycosylation site (N-linked (GlcNAc...) asparagine). Positions 712-771 are disordered; sequence TEGESQENWGGPAEDKGFYYQQMSDTQPNTRTSSKAKSKSKHKQNSEALIANDELDYSPE. The span at 732-743 shows a compositional bias: polar residues; it reads QQMSDTQPNTRT. Over residues 745 to 754 the composition is skewed to basic residues; the sequence is SKAKSKSKHK. Residues S757 and S769 each carry the phosphoserine modification.

Belongs to the amino acid-polyamine-organocation (APC) superfamily. Cationic amino acid transporter (CAT) (TC 2.A.3.3) family.

It is found in the lysosome membrane. The catalysed reaction is 4-aminobutanoate(in) = 4-aminobutanoate(out). Functionally, imports 4-aminobutanoate (GABA) into lysosomes. May act as a GABA sensor that regulates mTORC2-dependent INS signaling and gluconeogenesis. The transport mechanism and substrate selectivity remain to be elucidated. The chain is Solute carrier family 7 member 14 from Bos taurus (Bovine).